The chain runs to 76 residues: Acyl carrier protein (76 aa).

The Carrier domain occupies 1-76 (MATFDKVKDI…DVVNYIEQNQ (76 aa)). Position 36 is an O-(pantetheine 4'-phosphoryl)serine (S36).

This sequence belongs to the acyl carrier protein (ACP) family. Post-translationally, 4'-phosphopantetheine is transferred from CoA to a specific serine of apo-ACP by AcpS. This modification is essential for activity because fatty acids are bound in thioester linkage to the sulfhydryl of the prosthetic group.

The protein resides in the cytoplasm. Its pathway is lipid metabolism; fatty acid biosynthesis. In terms of biological role, carrier of the growing fatty acid chain in fatty acid biosynthesis. This Natranaerobius thermophilus (strain ATCC BAA-1301 / DSM 18059 / JW/NM-WN-LF) protein is Acyl carrier protein.